Reading from the N-terminus, the 117-residue chain is Large ribosomal subunit protein bL19 (117 aa).

It belongs to the bacterial ribosomal protein bL19 family.

This protein is located at the 30S-50S ribosomal subunit interface and may play a role in the structure and function of the aminoacyl-tRNA binding site. The sequence is that of Large ribosomal subunit protein bL19 from Azobacteroides pseudotrichonymphae genomovar. CFP2.